Reading from the N-terminus, the 427-residue chain is Beta-porphyranase D (427 aa).

The N-terminal stretch at 1–19 (MILKQAILTLVLVNANLFA) is a signal peptide. The interval 23-45 (PKTYSSTDKETRQGPPKPPMGKR) is disordered. The GH16 domain maps to 32-308 (ETRQGPPKPP…WVRAYRLVDV (277 aa)). The substrate site is built by tryptophan 73, arginine 76, glutamate 168, glutamate 173, and glutamate 272. Catalysis depends on glutamate 168, which acts as the Nucleophile. Residue glutamate 173 is the Proton donor of the active site.

This sequence belongs to the glycosyl hydrolase 16 family.

Its subcellular location is the periplasm. The enzyme catalyses Hydrolysis of beta-D-galactopyranose-(1-&gt;4)-alpha-L-galactopyranose-6-sulfate linkages in porphyran.. Cleaves the sulfated polysaccharide porphyran at the (1-&gt;4) linkages between beta-D-galactopyranose and alpha-L-galactopyranose-6-sulfate, forming mostly the disaccharide alpha-L-galactopyranose-6-sulfate-(1-&gt;3)-beta-D-galactose. The protein is Beta-porphyranase D (porD) of Zobellia galactanivorans (strain DSM 12802 / CCUG 47099 / CIP 106680 / NCIMB 13871 / Dsij).